The primary structure comprises 360 residues: Peptide chain release factor 1 (360 aa).

The residue at position 235 (Gln-235) is an N5-methylglutamine.

The protein belongs to the prokaryotic/mitochondrial release factor family. Methylated by PrmC. Methylation increases the termination efficiency of RF1.

The protein localises to the cytoplasm. Its function is as follows. Peptide chain release factor 1 directs the termination of translation in response to the peptide chain termination codons UAG and UAA. This chain is Peptide chain release factor 1, found in Burkholderia cenocepacia (strain ATCC BAA-245 / DSM 16553 / LMG 16656 / NCTC 13227 / J2315 / CF5610) (Burkholderia cepacia (strain J2315)).